Consider the following 147-residue polypeptide: Large ribosomal subunit protein uL15 (147 aa).

Positions Met1–Leu57 are disordered. Gly residues-rich tracts occupy residues Arg21–Ala31 and Ser42–Gly52.

It belongs to the universal ribosomal protein uL15 family. As to quaternary structure, part of the 50S ribosomal subunit.

In terms of biological role, binds to the 23S rRNA. The protein is Large ribosomal subunit protein uL15 of Desulfosudis oleivorans (strain DSM 6200 / JCM 39069 / Hxd3) (Desulfococcus oleovorans).